The sequence spans 607 residues: Putative pentatricopeptide repeat-containing protein At1g09680 (607 aa).

PPR repeat units lie at residues 239-273 (NVYV…SLQP), 274-308 (TVVS…RTRP), 309-343 (DVFT…GLIP), 344-378 (NDVI…GLQP), 379-413 (DIVL…GLRP), 414-448 (DKIT…GIEL), 449-483 (DRVG…GIKP), 484-518 (DDVT…GHVP), and 519-553 (SVVT…GVVP).

This sequence belongs to the PPR family. P subfamily.

The polypeptide is Putative pentatricopeptide repeat-containing protein At1g09680 (Arabidopsis thaliana (Mouse-ear cress)).